Consider the following 304-residue polypeptide: Dermonecrotic toxin LiSicTox-betaIA1ii (304 aa).

The first 21 residues, 1-21, serve as a signal peptide directing secretion; the sequence is MLLCAVISFIVYAVFLQEANG. Positions 22-26 are excised as a propeptide; the sequence is HAAER. H38 is a catalytic residue. 2 residues coordinate Mg(2+): E58 and D60. The active-site Nucleophile is H74. Intrachain disulfides connect C78–C84 and C80–C223. D118 lines the Mg(2+) pocket.

This sequence belongs to the arthropod phospholipase D family. Class II subfamily. Mg(2+) is required as a cofactor. In terms of tissue distribution, expressed by the venom gland.

The protein resides in the secreted. It catalyses the reaction an N-(acyl)-sphingosylphosphocholine = an N-(acyl)-sphingosyl-1,3-cyclic phosphate + choline. The catalysed reaction is an N-(acyl)-sphingosylphosphoethanolamine = an N-(acyl)-sphingosyl-1,3-cyclic phosphate + ethanolamine. The enzyme catalyses a 1-acyl-sn-glycero-3-phosphocholine = a 1-acyl-sn-glycero-2,3-cyclic phosphate + choline. It carries out the reaction a 1-acyl-sn-glycero-3-phosphoethanolamine = a 1-acyl-sn-glycero-2,3-cyclic phosphate + ethanolamine. In terms of biological role, dermonecrotic toxins cleave the phosphodiester linkage between the phosphate and headgroup of certain phospholipids (sphingolipid and lysolipid substrates), forming an alcohol (often choline) and a cyclic phosphate. This toxin acts on sphingomyelin (SM) with low activity. It may also act on ceramide phosphoethanolamine (CPE), lysophosphatidylcholine (LPC) and lysophosphatidylethanolamine (LPE), but not on lysophosphatidylserine (LPS), and lysophosphatidylglycerol (LPG). It acts by transphosphatidylation, releasing exclusively cyclic phosphate products as second products. Induces dermonecrosis, hemolysis, increased vascular permeability, edema, inflammatory response, and platelet aggregation. The protein is Dermonecrotic toxin LiSicTox-betaIA1ii of Loxosceles intermedia (Brown spider).